We begin with the raw amino-acid sequence, 334 residues long: Holliday junction branch migration complex subunit RuvB (334 aa).

A large ATPase domain (RuvB-L) region spans residues M1–Y182. ATP contacts are provided by residues L21, R22, G63, K66, T67, T68, E129–F131, R172, Y182, and R219. T67 lines the Mg(2+) pocket. Residues Q183–Q253 form a small ATPAse domain (RuvB-S) region. The tract at residues D256–E334 is head domain (RuvB-H). Positions 292, 311, and 316 each coordinate DNA.

The protein belongs to the RuvB family. As to quaternary structure, homohexamer. Forms an RuvA(8)-RuvB(12)-Holliday junction (HJ) complex. HJ DNA is sandwiched between 2 RuvA tetramers; dsDNA enters through RuvA and exits via RuvB. An RuvB hexamer assembles on each DNA strand where it exits the tetramer. Each RuvB hexamer is contacted by two RuvA subunits (via domain III) on 2 adjacent RuvB subunits; this complex drives branch migration. In the full resolvosome a probable DNA-RuvA(4)-RuvB(12)-RuvC(2) complex forms which resolves the HJ.

It localises to the cytoplasm. The enzyme catalyses ATP + H2O = ADP + phosphate + H(+). The RuvA-RuvB-RuvC complex processes Holliday junction (HJ) DNA during genetic recombination and DNA repair, while the RuvA-RuvB complex plays an important role in the rescue of blocked DNA replication forks via replication fork reversal (RFR). RuvA specifically binds to HJ cruciform DNA, conferring on it an open structure. The RuvB hexamer acts as an ATP-dependent pump, pulling dsDNA into and through the RuvAB complex. RuvB forms 2 homohexamers on either side of HJ DNA bound by 1 or 2 RuvA tetramers; 4 subunits per hexamer contact DNA at a time. Coordinated motions by a converter formed by DNA-disengaged RuvB subunits stimulates ATP hydrolysis and nucleotide exchange. Immobilization of the converter enables RuvB to convert the ATP-contained energy into a lever motion, pulling 2 nucleotides of DNA out of the RuvA tetramer per ATP hydrolyzed, thus driving DNA branch migration. The RuvB motors rotate together with the DNA substrate, which together with the progressing nucleotide cycle form the mechanistic basis for DNA recombination by continuous HJ branch migration. Branch migration allows RuvC to scan DNA until it finds its consensus sequence, where it cleaves and resolves cruciform DNA. In Staphylococcus saprophyticus subsp. saprophyticus (strain ATCC 15305 / DSM 20229 / NCIMB 8711 / NCTC 7292 / S-41), this protein is Holliday junction branch migration complex subunit RuvB.